The chain runs to 249 residues: Type III pantothenate kinase (249 aa).

Residue D6–K13 coordinates ATP. Residues Y93 and G100 to R103 contribute to the substrate site. D102 acts as the Proton acceptor in catalysis. D122 serves as a coordination point for K(+). T125 contacts ATP. Residue T181 participates in substrate binding.

The protein belongs to the type III pantothenate kinase family. In terms of assembly, homodimer. NH4(+) is required as a cofactor. Requires K(+) as cofactor.

The protein localises to the cytoplasm. The catalysed reaction is (R)-pantothenate + ATP = (R)-4'-phosphopantothenate + ADP + H(+). It participates in cofactor biosynthesis; coenzyme A biosynthesis; CoA from (R)-pantothenate: step 1/5. Functionally, catalyzes the phosphorylation of pantothenate (Pan), the first step in CoA biosynthesis. The protein is Type III pantothenate kinase of Pseudomonas putida (strain ATCC 700007 / DSM 6899 / JCM 31910 / BCRC 17059 / LMG 24140 / F1).